The following is a 108-amino-acid chain: U3-lycotoxin-Ls1w (108 aa).

Residues 1-20 (MKFVLLFGVLLVTLFSYSSA) form the signal peptide. The propeptide occupies 21-44 (EMLDDFDQADEDELLSLIEKEEAR). 4 disulfides stabilise this stretch: cysteine 48-cysteine 63, cysteine 55-cysteine 72, cysteine 62-cysteine 87, and cysteine 74-cysteine 85.

Belongs to the neurotoxin 19 (CSTX) family. 01 subfamily. In terms of tissue distribution, expressed by the venom gland.

It is found in the secreted. The sequence is that of U3-lycotoxin-Ls1w from Lycosa singoriensis (Wolf spider).